The chain runs to 406 residues: 8-amino-7-oxononanoate synthase (406 aa).

Arg-20 provides a ligand contact to substrate. 116-117 is a binding site for pyridoxal 5'-phosphate; that stretch reads GY. Residue His-141 participates in substrate binding. Ser-187, His-215, and Thr-243 together coordinate pyridoxal 5'-phosphate. Lys-246 carries the post-translational modification N6-(pyridoxal phosphate)lysine. Thr-366 contributes to the substrate binding site.

This sequence belongs to the class-II pyridoxal-phosphate-dependent aminotransferase family. BioF subfamily. As to quaternary structure, homodimer. Requires pyridoxal 5'-phosphate as cofactor.

It carries out the reaction 6-carboxyhexanoyl-[ACP] + L-alanine + H(+) = (8S)-8-amino-7-oxononanoate + holo-[ACP] + CO2. It participates in cofactor biosynthesis; biotin biosynthesis. Functionally, catalyzes the decarboxylative condensation of pimeloyl-[acyl-carrier protein] and L-alanine to produce 8-amino-7-oxononanoate (AON), [acyl-carrier protein], and carbon dioxide. The polypeptide is 8-amino-7-oxononanoate synthase (Cupriavidus metallidurans (strain ATCC 43123 / DSM 2839 / NBRC 102507 / CH34) (Ralstonia metallidurans)).